Reading from the N-terminus, the 63-residue chain is Beta-insect depressant toxin Im-3 (63 aa).

One can recognise an LCN-type CS-alpha/beta domain in the interval 1-63 (KEGYGVGKDG…KVWESSTNTC (63 aa)). Intrachain disulfides connect Cys-11/Cys-63, Cys-15/Cys-37, Cys-22/Cys-44, and Cys-26/Cys-46.

Belongs to the long (4 C-C) scorpion toxin superfamily. Sodium channel inhibitor family. Beta subfamily. Expressed by the venom gland.

It localises to the secreted. Its function is as follows. Beta toxins bind voltage-independently at site-4 of sodium channels (Nav) and shift the voltage of activation toward more negative potentials thereby affecting sodium channel activation and promoting spontaneous and repetitive firing. Induces paralysis in cricket A.domestica but does not induce death. In Isometrus maculatus (Lesser brown scorpion), this protein is Beta-insect depressant toxin Im-3.